We begin with the raw amino-acid sequence, 214 residues long: Orotate phosphoribosyltransferase (214 aa).

Residue K26 coordinates 5-phospho-alpha-D-ribose 1-diphosphate. An orotate-binding site is contributed by 34-35 (FF). 5-phospho-alpha-D-ribose 1-diphosphate-binding positions include 72–73 (YK), R99, K100, K103, H105, and 124–132 (DDVITAGTA). Residues T128 and R157 each contribute to the orotate site.

The protein belongs to the purine/pyrimidine phosphoribosyltransferase family. PyrE subfamily. In terms of assembly, homodimer. The cofactor is Mg(2+).

The enzyme catalyses orotidine 5'-phosphate + diphosphate = orotate + 5-phospho-alpha-D-ribose 1-diphosphate. It functions in the pathway pyrimidine metabolism; UMP biosynthesis via de novo pathway; UMP from orotate: step 1/2. Catalyzes the transfer of a ribosyl phosphate group from 5-phosphoribose 1-diphosphate to orotate, leading to the formation of orotidine monophosphate (OMP). In Pseudomonas fluorescens (strain ATCC BAA-477 / NRRL B-23932 / Pf-5), this protein is Orotate phosphoribosyltransferase.